The sequence spans 258 residues: Acyl-[acyl-carrier-protein]--UDP-N-acetylglucosamine O-acyltransferase (258 aa).

The protein belongs to the transferase hexapeptide repeat family. LpxA subfamily. In terms of assembly, homotrimer.

The protein localises to the cytoplasm. The catalysed reaction is a (3R)-hydroxyacyl-[ACP] + UDP-N-acetyl-alpha-D-glucosamine = a UDP-3-O-[(3R)-3-hydroxyacyl]-N-acetyl-alpha-D-glucosamine + holo-[ACP]. The protein operates within glycolipid biosynthesis; lipid IV(A) biosynthesis; lipid IV(A) from (3R)-3-hydroxytetradecanoyl-[acyl-carrier-protein] and UDP-N-acetyl-alpha-D-glucosamine: step 1/6. Functionally, involved in the biosynthesis of lipid A, a phosphorylated glycolipid that anchors the lipopolysaccharide to the outer membrane of the cell. The polypeptide is Acyl-[acyl-carrier-protein]--UDP-N-acetylglucosamine O-acyltransferase (Alkalilimnicola ehrlichii (strain ATCC BAA-1101 / DSM 17681 / MLHE-1)).